Reading from the N-terminus, the 520-residue chain is Arginine biosynthesis bifunctional protein ArgJ, chloroplastic (520 aa).

T264, K290, T301, E388, N515, and T520 together coordinate substrate. T301 (nucleophile) is an active-site residue.

Belongs to the ArgJ family. Heterodimer of an alpha and a beta chain.

It is found in the plastid. The protein resides in the chloroplast. The enzyme catalyses N(2)-acetyl-L-ornithine + L-glutamate = N-acetyl-L-glutamate + L-ornithine. It carries out the reaction L-glutamate + acetyl-CoA = N-acetyl-L-glutamate + CoA + H(+). Its pathway is amino-acid biosynthesis; L-arginine biosynthesis; L-ornithine and N-acetyl-L-glutamate from L-glutamate and N(2)-acetyl-L-ornithine (cyclic): step 1/1. It functions in the pathway amino-acid biosynthesis; L-arginine biosynthesis; N(2)-acetyl-L-ornithine from L-glutamate: step 1/4. Its function is as follows. Catalyzes two activities which are involved in the cyclic version of arginine biosynthesis: the synthesis of acetylglutamate from glutamate and acetyl-CoA, and of ornithine by transacetylation between acetylornithine and glutamate. The protein is Arginine biosynthesis bifunctional protein ArgJ, chloroplastic of Physcomitrium patens (Spreading-leaved earth moss).